Consider the following 378-residue polypeptide: Glutamate 5-kinase (378 aa).

An ATP-binding site is contributed by Lys14. Positions 54, 141, and 153 each coordinate substrate. Position 173 to 174 (173 to 174 (SD)) interacts with ATP. A PUA domain is found at 279-356 (AGRLTVDAGA…DEISEILGYD (78 aa)).

This sequence belongs to the glutamate 5-kinase family.

The protein resides in the cytoplasm. The enzyme catalyses L-glutamate + ATP = L-glutamyl 5-phosphate + ADP. The protein operates within amino-acid biosynthesis; L-proline biosynthesis; L-glutamate 5-semialdehyde from L-glutamate: step 1/2. In terms of biological role, catalyzes the transfer of a phosphate group to glutamate to form L-glutamate 5-phosphate. This is Glutamate 5-kinase from Brucella anthropi (strain ATCC 49188 / DSM 6882 / CCUG 24695 / JCM 21032 / LMG 3331 / NBRC 15819 / NCTC 12168 / Alc 37) (Ochrobactrum anthropi).